The sequence spans 328 residues: Coiled-coil domain-containing protein 54 (328 aa).

Residues 93 to 148 are a coiled coil; the sequence is KIQEKTDFFQKQMQVLETKMNVNENKQCATAEDIFSVKEDVDALKKKVTELGNQNS. T182 is modified (phosphothreonine).

This chain is Coiled-coil domain-containing protein 54 (CCDC54), found in Bos taurus (Bovine).